Reading from the N-terminus, the 310-residue chain is Porphobilinogen deaminase (310 aa).

An S-(dipyrrolylmethanemethyl)cysteine modification is found at Cys-242.

Belongs to the HMBS family. As to quaternary structure, monomer. It depends on dipyrromethane as a cofactor.

The catalysed reaction is 4 porphobilinogen + H2O = hydroxymethylbilane + 4 NH4(+). It participates in porphyrin-containing compound metabolism; protoporphyrin-IX biosynthesis; coproporphyrinogen-III from 5-aminolevulinate: step 2/4. Tetrapolymerization of the monopyrrole PBG into the hydroxymethylbilane pre-uroporphyrinogen in several discrete steps. This is Porphobilinogen deaminase from Shewanella oneidensis (strain ATCC 700550 / JCM 31522 / CIP 106686 / LMG 19005 / NCIMB 14063 / MR-1).